The sequence spans 435 residues: Adenylosuccinate synthetase (435 aa).

Residues 11-17 (GDEGKGK) and 39-41 (GHT) each bind GTP. Aspartate 12 acts as the Proton acceptor in catalysis. 2 residues coordinate Mg(2+): aspartate 12 and glycine 39. IMP-binding positions include 12 to 15 (DEGK), 37 to 40 (NAGH), threonine 128, arginine 142, glutamine 223, threonine 238, and arginine 302. Catalysis depends on histidine 40, which acts as the Proton donor. 298–304 (SVTGRPR) is a binding site for substrate. GTP-binding positions include arginine 304, 330-332 (KLD), and 412-414 (STG).

The protein belongs to the adenylosuccinate synthetase family. Homodimer. Mg(2+) is required as a cofactor.

It localises to the cytoplasm. It carries out the reaction IMP + L-aspartate + GTP = N(6)-(1,2-dicarboxyethyl)-AMP + GDP + phosphate + 2 H(+). The protein operates within purine metabolism; AMP biosynthesis via de novo pathway; AMP from IMP: step 1/2. Plays an important role in the de novo pathway of purine nucleotide biosynthesis. Catalyzes the first committed step in the biosynthesis of AMP from IMP. The sequence is that of Adenylosuccinate synthetase from Coxiella burnetii (strain RSA 331 / Henzerling II).